A 631-amino-acid polypeptide reads, in one-letter code: ATP-dependent RNA helicase DBP6 (631 aa).

A disordered region spans residues 1-161 (MERCDGVMFA…LAPLPQPALP (161 aa)). Basic and acidic residues predominate over residues 13 to 23 (YDPEDGKRESV). Residues 24–41 (SEDTESERESESGSESES) are compositionally biased toward acidic residues. The span at 42–56 (ESEKETESESEKETE) shows a compositional bias: basic and acidic residues. The segment covering 80–93 (SVSDSDSDSGSQSR) has biased composition (low complexity). Over residues 94 to 104 (SDSDVEMKEVD) the composition is skewed to basic and acidic residues. The Q motif motif lies at 191 to 219 (VPFSSFGLSSSMVKNLQSNGFSSAFSVQV). In terms of domain architecture, Helicase ATP-binding spans 233–416 (AIRPDIGGDL…MLKLQRPRLI (184 aa)). 246–253 (AATGSGKT) provides a ligand contact to ATP. A DEAD box motif is present at residues 352–355 (DEAD). The 150-residue stretch at 459–608 (MSEQKLVNTL…DVEKGFRDLV (150 aa)) folds into the Helicase C-terminal domain.

This sequence belongs to the DEAD box helicase family. DDX51/DBP6 subfamily. As to quaternary structure, associated with pre-ribosomal particles.

It is found in the nucleus. The protein resides in the nucleolus. The enzyme catalyses ATP + H2O = ADP + phosphate + H(+). Its function is as follows. ATP-binding RNA helicase involved in the biogenesis of 60S ribosomal subunits and is required for the normal formation of 25S and 5.8S rRNAs. This Meyerozyma guilliermondii (strain ATCC 6260 / CBS 566 / DSM 6381 / JCM 1539 / NBRC 10279 / NRRL Y-324) (Yeast) protein is ATP-dependent RNA helicase DBP6 (DBP6).